A 508-amino-acid chain; its full sequence is T-complex protein 1 subunit beta (508 aa).

The protein belongs to the TCP-1 chaperonin family. In terms of assembly, component of the T-complex protein 1 (TCP1) complex.

Its subcellular location is the cytoplasm. Functionally, molecular chaperone; assists the folding of proteins upon ATP hydrolysis. This Encephalitozoon cuniculi (strain GB-M1) (Microsporidian parasite) protein is T-complex protein 1 subunit beta (CCT2).